The sequence spans 106 residues: UPF0145 protein PputGB1_2909 (106 aa).

This sequence belongs to the UPF0145 family.

This Pseudomonas putida (strain GB-1) protein is UPF0145 protein PputGB1_2909.